A 379-amino-acid polypeptide reads, in one-letter code: Succinyl-diaminopimelate desuccinylase (379 aa).

Residue His70 participates in Zn(2+) binding. Residue Asp72 is part of the active site. Position 103 (Asp103) interacts with Zn(2+). The active-site Proton acceptor is the Glu137. Zn(2+)-binding residues include Glu138, Glu166, and His352.

Belongs to the peptidase M20A family. DapE subfamily. In terms of assembly, homodimer. It depends on Zn(2+) as a cofactor. Co(2+) serves as cofactor.

The enzyme catalyses N-succinyl-(2S,6S)-2,6-diaminopimelate + H2O = (2S,6S)-2,6-diaminopimelate + succinate. Its pathway is amino-acid biosynthesis; L-lysine biosynthesis via DAP pathway; LL-2,6-diaminopimelate from (S)-tetrahydrodipicolinate (succinylase route): step 3/3. In terms of biological role, catalyzes the hydrolysis of N-succinyl-L,L-diaminopimelic acid (SDAP), forming succinate and LL-2,6-diaminopimelate (DAP), an intermediate involved in the bacterial biosynthesis of lysine and meso-diaminopimelic acid, an essential component of bacterial cell walls. The sequence is that of Succinyl-diaminopimelate desuccinylase from Burkholderia cenocepacia (strain HI2424).